The chain runs to 150 residues: UPF0208 membrane protein VV1_2222 (150 aa).

A run of 2 helical transmembrane segments spans residues 42–62 (FGIKVMPAIAAISVLTQMAFN) and 70–90 (AIVMALFALSLPLQGMWWLGH).

It belongs to the UPF0208 family.

The protein localises to the cell inner membrane. The protein is UPF0208 membrane protein VV1_2222 of Vibrio vulnificus (strain CMCP6).